The primary structure comprises 555 residues: Zinc transporter ZIP5 (555 aa).

At 1–242 (MGGQTVWMTL…HSQASKTSEG (242 aa)) the chain is on the extracellular side. The tract at residues 108–148 (KHPSQSISHSHSHEDHHPSQGTTNSPPLRESLDAKSALSGS) is disordered. A helical membrane pass occupies residues 243-263 (FLIALGWASLALLVISLPSLV). Topologically, residues 264 to 314 (ALGMAPLLQPSVLQVFLCPMAGMAVGTLCGDALLHLMPHAIFSQHTDHQNA) are cytoplasmic. The chain crosses the membrane as a helical span at residues 315–335 (VFKGLSVLGGLYLLFIFESLL). Over 336-408 (GLKQHFKNLK…DGIHNLTDGL (73 aa)) the chain is Extracellular. The segment covering 363 to 374 (TSSANQNESSGH) has biased composition (polar residues). The segment at 363–383 (TSSANQNESSGHGHSHGQAEP) is disordered. A helical transmembrane segment spans residues 409–429 (AIGVAFSQSLTGGFSTAIAVF). The Cytoplasmic portion of the chain corresponds to 430–452 (CHELPHELGDLAVLLSAGWPVRR). A helical membrane pass occupies residues 453-473 (LLVFSGLSALLGFVGVLAGSA). At 474–482 (LGNHWASHS) the chain is on the extracellular side. A helical membrane pass occupies residues 483–503 (PWILTLTAGVFLYVALADMMP). At 504–518 (EMLHGACGSVSPLKR) the chain is on the cytoplasmic side. Residues 519–539 (FLLQALGLLTGGAIMLCIALF) traverse the membrane as a helical segment. The Extracellular segment spans residues 540–555 (EDHIAVSLGENSLGEN).

Belongs to the ZIP transporter (TC 2.A.5) family.

The protein resides in the basolateral cell membrane. The enzyme catalyses Zn(2+)(in) = Zn(2+)(out). In terms of biological role, uniporter that transports zinc(2+) into polarized cells of enterocytes, pancreatic acinar and endoderm cells across the basolateral membrane and participates, notably, in zinc excretion from the intestine by the uptake of zinc from the blood into the intestine. The transport mechanism is temperature- and concentration-dependent and saturable. Mediates zinc homeostasis that is essential for venous angiogenesis. The chain is Zinc transporter ZIP5 (slc39a5) from Danio rerio (Zebrafish).